Reading from the N-terminus, the 833-residue chain is Mannosyl-oligosaccharide glucosidase (833 aa).

The Cytoplasmic portion of the chain corresponds to 1–10; that stretch reads MLISKSKMFK. The chain crosses the membrane as a helical; Signal-anchor for type II membrane protein span at residues 11-28; that stretch reads TFWILTSIVLLASATVDI. Over 29–833 the chain is Lumenal; that stretch reads SKLQEFEEYQ…ALVVNILGRF (805 aa). Residues asparagine 42 and asparagine 122 each contribute to the substrate site. N-linked (GlcNAc...) asparagine glycosylation is found at asparagine 42, asparagine 122, and asparagine 135. Glutamate 143 lines the substrate pocket. The Proton donor role is filled by aspartate 601. Cysteine 669 and cysteine 685 are disulfide-bonded. A glycan (N-linked (GlcNAc...) asparagine) is linked at asparagine 787. Glutamate 804 functions as the Proton acceptor in the catalytic mechanism.

Belongs to the glycosyl hydrolase 63 family. In terms of processing, N-glycosylated.

The protein localises to the endoplasmic reticulum membrane. The catalysed reaction is N(4)-(alpha-D-Glc-(1-&gt;2)-alpha-D-Glc-(1-&gt;3)-alpha-D-Glc-(1-&gt;3)-alpha-D-Man-(1-&gt;2)-alpha-D-Man-(1-&gt;2)-alpha-D-Man-(1-&gt;3)-[alpha-D-Man-(1-&gt;2)-alpha-D-Man-(1-&gt;3)-[alpha-D-Man-(1-&gt;2)-alpha-D-Man-(1-&gt;6)]-alpha-D-Man-(1-&gt;6)]-beta-D-Man-(1-&gt;4)-beta-D-GlcNAc-(1-&gt;4)-beta-D-GlcNAc)-L-asparaginyl-[protein] + H2O = N(4)-(alpha-D-Glc-(1-&gt;3)-alpha-D-Glc-(1-&gt;3)-alpha-D-Man-(1-&gt;2)-alpha-D-Man-(1-&gt;2)-alpha-D-Man-(1-&gt;3)-[alpha-D-Man-(1-&gt;2)-alpha-D-Man-(1-&gt;3)-[alpha-D-Man-(1-&gt;2)-alpha-D-Man-(1-&gt;6)]-alpha-D-Man-(1-&gt;6)]-beta-D-Man-(1-&gt;4)-beta-D-GlcNAc-(1-&gt;4)-beta-D-GlcNAc)-L-asparaginyl-[protein] + beta-D-glucose. It participates in glycan metabolism; N-glycan degradation. With respect to regulation, miglitol is an effective inhibitor at 1 mM. Its function is as follows. Cleaves the distal alpha 1,2-linked glucose residue from the Glc(3)Man(9)GlcNAc(2) oligosaccharide precursor highly specifically. Seems to play a role in beta-1,6-glucan synthesis. This Saccharomyces cerevisiae (strain ATCC 204508 / S288c) (Baker's yeast) protein is Mannosyl-oligosaccharide glucosidase (CWH41).